The primary structure comprises 199 residues: NAD(P)H dehydrogenase (quinone) (199 aa).

The region spanning 4-190 is the Flavodoxin-like domain; that stretch reads VLVLYYSTYG…DGARYQGRHV (187 aa). Residues 10-15 and 78-80 each bind FMN; these read STYGHI and TRY. Position 12 (Y12) interacts with NAD(+). W98 contacts substrate. Residues 113 to 119 and H134 contribute to the FMN site; that span reads SSASQHG.

This sequence belongs to the WrbA family. It depends on FMN as a cofactor.

The enzyme catalyses a quinone + NADH + H(+) = a quinol + NAD(+). It catalyses the reaction a quinone + NADPH + H(+) = a quinol + NADP(+). In Methylobacterium sp. (strain 4-46), this protein is NAD(P)H dehydrogenase (quinone).